Reading from the N-terminus, the 1321-residue chain is Serine/threonine-protein kinase SIK3 (1321 aa).

Residues 1-59 (MAAAAASGAGGAAGAGTGGAGPAGRLLPPPAPGSPAAPAAVSPAAGQPRPPAPASRGPM) form a disordered region. Over residues 8-22 (GAGGAAGAGTGGAGP) the composition is skewed to gly residues. The segment covering 36–47 (AAPAAVSPAAGQ) has biased composition (low complexity). In terms of domain architecture, Protein kinase spans 66-317 (YEIDRTIGKG…MEQICKHKWM (252 aa)). T71 is subject to Phosphothreonine. ATP-binding positions include 72-80 (IGKGNFAVV) and K95. E113 carries the phosphothreonine modification. D188 functions as the Proton acceptor in the catalytic mechanism. T221 carries the post-translational modification Phosphothreonine; by LKB1. The region spanning 344 to 384 (PLNEDVLLAMEDMGLDKEQTLQSLRSDAYDHYSAIYSLLCD) is the UBA domain. T469 is subject to Phosphothreonine. 3 positions are modified to phosphoserine: S551, S591, and S592. The interval 585–614 (TPVDEESSDGEPDQEAVQSSTYKDSNTLHL) is disordered. Acidic residues predominate over residues 587 to 598 (VDEESSDGEPDQ). Positions 600–613 (AVQSSTYKDSNTLH) are enriched in polar residues. Residues S626 and S647 each carry the phosphoserine modification. The tract at residues 727 to 772 (IQPSSPPPNHPNNHLFRQPSNSPPPMSSAMIQPHGAASSSQFQGLP) is disordered. Residues 763–772 (ASSSQFQGLP) are compositionally biased toward polar residues. S866 is subject to Phosphoserine. Residues 894-945 (LFSDQSRGSPSSYSPSTGVGFSPTQALKVPPLDQFPTFPPSAHQQPPHYTTS) are disordered. Over residues 896–909 (SDQSRGSPSSYSPS) the composition is skewed to low complexity. The segment covering 935–945 (AHQQPPHYTTS) has biased composition (polar residues). S978 is subject to Phosphoserine. Residue R986 is modified to Omega-N-methylarginine. Positions 1256-1265 (SLMGSQQFQD) are enriched in polar residues. A disordered region spans residues 1256-1289 (SLMGSQQFQDGENEECGASLGGHEHPDLSDGSQH).

This sequence belongs to the protein kinase superfamily. CAMK Ser/Thr protein kinase family. SNF1 subfamily. Binds to and is activated by YWHAZ when phosphorylated on Thr-221. Interacts with 14-3-3 proteins. Interacts with HDAC4; this interaction leads to HDAC4 retention in the cytoplasm. Interacts with DEPTOR, MLST8/GbetaL, RICTOR and RPTOR. The cofactor is Mg(2+). Phosphorylated at Thr-221 by STK11/LKB1 in complex with STE20-related adapter-alpha (STRADA) pseudo kinase and CAB39. Phosphorylation at Thr-221 is inhibited in response to PTHLH/PTHrP. Phosphorylated at Thr-469 and Ser-551 in response to cAMP signaling. In terms of tissue distribution, expressed in chondrocytes.

Its subcellular location is the cytoplasm. It carries out the reaction L-seryl-[protein] + ATP = O-phospho-L-seryl-[protein] + ADP + H(+). The enzyme catalyses L-threonyl-[protein] + ATP = O-phospho-L-threonyl-[protein] + ADP + H(+). With respect to regulation, activated by phosphorylation on Thr-221. Its function is as follows. Positive regulator of mTOR signaling that functions by triggering the degradation of DEPTOR, an mTOR inhibitor. Involved in the dynamic regulation of mTOR signaling in chondrocyte differentiation during skeletogenesis. Negatively regulates cAMP signaling pathway possibly by acting on CRTC2/TORC2 and CRTC3/TORC3. Prevents HDAC4 translocation to the nucleus. This chain is Serine/threonine-protein kinase SIK3, found in Homo sapiens (Human).